We begin with the raw amino-acid sequence, 618 residues long: Poly(A)-specific ribonuclease PARN-like (618 aa).

4 residues coordinate a divalent metal cation: Ser-54, Gln-56, Asp-332, and Asn-418. A disordered region spans residues Ala-588 to Trp-607.

The protein belongs to the CAF1 family. The cofactor is a divalent metal cation.

It is found in the nucleus. It localises to the cytoplasm. The enzyme catalyses Exonucleolytic cleavage of poly(A) to 5'-AMP.. Its function is as follows. 3'-exoribonuclease that has a preference for poly(A) tails of mRNAs, thereby efficiently degrading poly(A) tails. Exonucleolytic degradation of the poly(A) tail is often the first step in the decay of eukaryotic mRNAs. This Arabidopsis thaliana (Mouse-ear cress) protein is Poly(A)-specific ribonuclease PARN-like.